The following is a 535-amino-acid chain: Heparanase (535 aa).

Positions 1–27 are cleaved as a signal peptide; sequence MLRLLLLWLWGPLGALAQGAPAGTAPT. Heparan sulfate group contacts are provided by residues 54–56 and threonine 89; that span reads DAS. Positions 102–149 are cleaved as a propeptide — linker peptide; it reads PTSEERSYWKSQVNHDICRSEPVSAAVLRKLQVEWPFQELLLLREQYQ. A disulfide bridge links cysteine 119 with cysteine 171. 150–154 is a heparan sulfate group binding site; sequence KEFKN. N-linked (GlcNAc...) asparagine glycans are attached at residues asparagine 192 and asparagine 209. Glutamate 217 (proton donor) is an active-site residue. Heparan sulfate group is bound by residues 262–272, histidine 288, and arginine 295; that span reads QPRGKTVKLLR. The required for heterodimerization with the heparanase 8 kDa subunit stretch occupies residues 280-409; that stretch reads EVIDSLTWHH…LLFKKLVGPR (130 aa). The active-site Nucleophile is the glutamate 335. Heparan sulfate group contacts are provided by residues 340–342 and 381–383; these read YGG and GNY. Residues cysteine 429 and cysteine 534 are joined by a disulfide bond. The N-linked (GlcNAc...) asparagine glycan is linked to asparagine 451. Residues 519–535 form a required for transferring proheparanase to the Golgi apparatus, secretion and subsequent enzyme activity and for enhancement of PKB/AKT1 phosphorylation region; the sequence is FSYGFFVIRNAKIAACI.

It belongs to the glycosyl hydrolase 79 family. As to quaternary structure, heterodimer; heterodimer formation between the 8 kDa and the 50 kDa subunits is required for enzyme activity. Interacts with TF; the interaction, inhibited by heparin, enhances the generation of activated factor X and activates coagulation. Interacts with HRG; the interaction is enhanced at acidic pH, partially inhibits binding of HPSE to cell surface receptors and modulates its enzymatic activity. Interacts with SDC1; the interaction enhances the shedding of SDC1. Interacts with HPSE2. Proteolytically processed. The cleavage of the 65 kDa form leads to the generation of a linker peptide, and the 8 kDa and 50 kDa products. The active form, the 8/50 kDa heterodimer, is resistant to degradation. Complete removal of the linker peptide appears to be a prerequisite to the complete activation of the enzyme. Post-translationally, N-glycosylated. Glycosylation of the 50 kDa subunit appears to be essential for its solubility. In terms of tissue distribution, expressed in skin, mainly in the stratum granulosum and the first layer of the stratum corneum in the upper part of the epidermis. Also detected in hair follicles and in sebaceous glands.

The protein localises to the lysosome membrane. Its subcellular location is the secreted. The protein resides in the nucleus. The enzyme catalyses endohydrolysis of (1-&gt;4)-beta-D-glycosidic bonds of heparan sulfate chains in heparan sulfate proteoglycan.. Its activity is regulated as follows. Inhibited by EDTA and activated by calcium and magnesium. Inhibited by laminarin sulfate and, to a lower extent, by heparin and sulfamin. In terms of biological role, endoglycosidase that cleaves heparan sulfate proteoglycans (HSPGs) into heparan sulfate side chains and core proteoglycans. Participates in extracellular matrix (ECM) degradation and remodeling. Selectively cleaves the linkage between a glucuronic acid unit and an N-sulfo glucosamine unit carrying either a 3-O-sulfo or a 6-O-sulfo group. Can also cleave the linkage between a glucuronic acid unit and an N-sulfo glucosamine unit carrying a 2-O-sulfo group, but not linkages between a glucuronic acid unit and a 2-O-sulfated iduronic acid moiety. It is essentially inactive at neutral pH but becomes active under acidic conditions such as during tumor invasion and in inflammatory processes. Facilitates cell migration associated with metastasis, wound healing and inflammation. Enhances shedding of syndecans, and increases endothelial invasion and angiogenesis in myelomas. Acts as a procoagulant by increasing the generation of activation factor X in the presence of tissue factor and activation factor VII. Increases cell adhesion to the extracellular matrix (ECM), independent of its enzymatic activity. Induces AKT1/PKB phosphorylation via lipid rafts increasing cell mobility and invasion. Heparin increases this AKT1/PKB activation. Regulates osteogenesis. Enhances angiogenesis through up-regulation of SRC-mediated activation of VEGF. Implicated in hair follicle inner root sheath differentiation and hair homeostasis. The chain is Heparanase (Hpse) from Mus musculus (Mouse).